Here is a 247-residue protein sequence, read N- to C-terminus: Potassium channel Ftrac_2467 (247 aa).

The next 6 membrane-spanning stretches (helical) occupy residues 23-44, 56-78, 89-117, 142-165, 187-210, and 215-237; these read TRIE…VLSS, SMRD…YQHY, KVTI…RFLS, LKLL…LMYW, SIIA…IDPW, and TTIL…GRIT. A RxxxFSD motif motif is present at residues 24–30; that stretch reads RIETFSD.

The protein belongs to the TMEM175 family. Homotetramer.

The protein localises to the cell membrane. The enzyme catalyses K(+)(in) = K(+)(out). In terms of biological role, potassium channel; forms a potassium-permeable leak-like channel with weak selectivity for potassium. The channel is permeable for K(+), Rb(+) and Cs(+). The polypeptide is Potassium channel Ftrac_2467 (Marivirga tractuosa (strain ATCC 23168 / DSM 4126 / NBRC 15989 / NCIMB 1408 / VKM B-1430 / H-43) (Microscilla tractuosa)).